Consider the following 215-residue polypeptide: Cytochrome b6 (215 aa).

A helical membrane pass occupies residues 32–52 (IFYCLGGITLTCFLVQVATGF). Cys35 is a heme c binding site. His86 and His100 together coordinate heme b. The next 3 helical transmembrane spans lie at 90–110 (ASMM…TGGF), 116–136 (LTWV…VTGY), and 186–206 (LHTF…FPMI). Heme b is bound by residues His187 and His202.

This sequence belongs to the cytochrome b family. PetB subfamily. The 4 large subunits of the cytochrome b6-f complex are cytochrome b6, subunit IV (17 kDa polypeptide, PetD), cytochrome f and the Rieske protein, while the 4 small subunits are PetG, PetL, PetM and PetN. The complex functions as a dimer. Heme b serves as cofactor. It depends on heme c as a cofactor.

The protein localises to the plastid. It localises to the chloroplast thylakoid membrane. Component of the cytochrome b6-f complex, which mediates electron transfer between photosystem II (PSII) and photosystem I (PSI), cyclic electron flow around PSI, and state transitions. The sequence is that of Cytochrome b6 from Agrostis stolonifera (Creeping bentgrass).